Here is a 416-residue protein sequence, read N- to C-terminus: Protein MID1-COMPLEMENTING ACTIVITY 2 (416 aa).

The stretch at 191-219 (CEALKTEEEKLQLELQRSRARYDADQCEV) forms a coiled coil. A helical transmembrane segment spans residues 338-354 (LIVYSLILSCCCYTCCI).

In terms of tissue distribution, expressed in roots, leaves, stems, flowers and siliques. In the root, high levels of expression in vascular tissues, in the stele and endodermis, but no expression in the cortex, epidermis, root cap, promeristem and adjacent elongation zone of the primary root. Not expressed in root hairs. Detected in shoot apical meristem, leaf mesophyll cells and vascular tissues, upper half of inflorescence, but not in petioles of rosette leaves.

Its subcellular location is the cell membrane. With respect to regulation, inhibited by GdCl(3), but not by verapamil. Calcium-permeable stretch-activated channel component. Probably involved in mechanosensing and in mechano-stimulated calcium uptake mechanism. This is Protein MID1-COMPLEMENTING ACTIVITY 2 (MCA2) from Arabidopsis thaliana (Mouse-ear cress).